The chain runs to 368 residues: Quinolinate synthase (368 aa).

Iminosuccinate-binding residues include His46 and Ser63. Cys110 contributes to the [4Fe-4S] cluster binding site. Residues 141–143 (YVN) and Ser162 contribute to the iminosuccinate site. A [4Fe-4S] cluster-binding site is contributed by Cys230. Iminosuccinate is bound by residues 256–258 (HPE) and Thr273. [4Fe-4S] cluster is bound at residue Cys320.

It belongs to the quinolinate synthase family. Type 3 subfamily. The cofactor is [4Fe-4S] cluster.

Its subcellular location is the cytoplasm. It catalyses the reaction iminosuccinate + dihydroxyacetone phosphate = quinolinate + phosphate + 2 H2O + H(+). The protein operates within cofactor biosynthesis; NAD(+) biosynthesis; quinolinate from iminoaspartate: step 1/1. In terms of biological role, catalyzes the condensation of iminoaspartate with dihydroxyacetone phosphate to form quinolinate. The protein is Quinolinate synthase of Bacillus cytotoxicus (strain DSM 22905 / CIP 110041 / 391-98 / NVH 391-98).